A 295-amino-acid chain; its full sequence is Protoheme IX farnesyltransferase (295 aa).

A run of 9 helical transmembrane segments spans residues 9–29 (ITKP…FFLA), 36–56 (FGVF…GCVF), 80–100 (LVSL…GVAL), 108–128 (LAAL…SLYL), 135–155 (GTLV…CAVT), 163–183 (LTLL…IAIF), 209–229 (IMLY…GGYA), 230–250 (GLNY…MAWK), and 265–285 (FVFS…DFQV).

This sequence belongs to the UbiA prenyltransferase family. Protoheme IX farnesyltransferase subfamily.

Its subcellular location is the cell inner membrane. The catalysed reaction is heme b + (2E,6E)-farnesyl diphosphate + H2O = Fe(II)-heme o + diphosphate. It participates in porphyrin-containing compound metabolism; heme O biosynthesis; heme O from protoheme: step 1/1. Converts heme B (protoheme IX) to heme O by substitution of the vinyl group on carbon 2 of heme B porphyrin ring with a hydroxyethyl farnesyl side group. The polypeptide is Protoheme IX farnesyltransferase (Pseudomonas savastanoi pv. phaseolicola (strain 1448A / Race 6) (Pseudomonas syringae pv. phaseolicola (strain 1448A / Race 6))).